The primary structure comprises 145 residues: MIALIQRVSQASVTVNGEIIGEIEKGLLVFLAIEPLDNEQKAKRLAERVAGYRVFNDENDKMNLNVKQAEGNILVVSQFTLAADTSSGMRPSFTTAAKPEFSNHLYQFFVTQLRDKGFDVPTGEFAADMKVALINDGPVTFTLTI.

The short motif at 137 to 138 (GP) is the Gly-cisPro motif, important for rejection of L-amino acids element.

Belongs to the DTD family. In terms of assembly, homodimer.

Its subcellular location is the cytoplasm. It carries out the reaction glycyl-tRNA(Ala) + H2O = tRNA(Ala) + glycine + H(+). The catalysed reaction is a D-aminoacyl-tRNA + H2O = a tRNA + a D-alpha-amino acid + H(+). An aminoacyl-tRNA editing enzyme that deacylates mischarged D-aminoacyl-tRNAs. Also deacylates mischarged glycyl-tRNA(Ala), protecting cells against glycine mischarging by AlaRS. Acts via tRNA-based rather than protein-based catalysis; rejects L-amino acids rather than detecting D-amino acids in the active site. By recycling D-aminoacyl-tRNA to D-amino acids and free tRNA molecules, this enzyme counteracts the toxicity associated with the formation of D-aminoacyl-tRNA entities in vivo and helps enforce protein L-homochirality. The protein is D-aminoacyl-tRNA deacylase of Colwellia psychrerythraea (strain 34H / ATCC BAA-681) (Vibrio psychroerythus).